Here is a 223-residue protein sequence, read N- to C-terminus: Adenylate kinase 4, mitochondrial (223 aa).

Position 15 to 20 (15 to 20) interacts with a ribonucleoside 5'-triphosphate; it reads GSGKGT. The tract at residues 35 to 64 is NMP; that stretch reads SSGHFLRENIKANTEVGDMAKQYIEKGLLV. 2 residues coordinate AMP: S36 and R41. K60 is modified (N6-succinyllysine). AMP contacts are provided by residues 62–64, 89–92, and Q96; these read LLV and GFPR. An LID region spans residues 125 to 162; that stretch reads RRWIHPPSGRVYNLDFNPPHVHGMDDVTGEPLVQQEDD. Residues R126 and 135–136 each bind a ribonucleoside 5'-triphosphate; that span reads VY. R170 lines the AMP pocket. Residue K175 is modified to N6-acetyllysine. An N6-acetyllysine; alternate mark is found at K179 and K186. Residues K179 and K186 each carry the N6-succinyllysine; alternate modification. T199 contributes to the a ribonucleoside 5'-triphosphate binding site.

The protein belongs to the adenylate kinase family. AK3 subfamily. As to quaternary structure, monomer. Interacts with SLC25A5/ANT2.

It localises to the mitochondrion matrix. The enzyme catalyses a ribonucleoside 5'-phosphate + ATP = a ribonucleoside 5'-diphosphate + ADP. It catalyses the reaction AMP + ATP = 2 ADP. The catalysed reaction is GTP + AMP = GDP + ADP. It carries out the reaction CMP + ATP = CDP + ADP. The enzyme catalyses GTP + CMP = CDP + GDP. It catalyses the reaction dAMP + ATP = dADP + ADP. The catalysed reaction is dCMP + ATP = dCDP + ADP. It carries out the reaction a 2'-deoxyribonucleoside 5'-diphosphate + ATP = a 2'-deoxyribonucleoside 5'-triphosphate + ADP. The enzyme catalyses a ribonucleoside 5'-diphosphate + ATP = a ribonucleoside 5'-triphosphate + ADP. It catalyses the reaction GDP + ATP = GTP + ADP. The catalysed reaction is CDP + GTP = CTP + GDP. It carries out the reaction CDP + ATP = CTP + ADP. The enzyme catalyses UDP + ATP = UTP + ADP. It catalyses the reaction GTP + UDP = UTP + GDP. The catalysed reaction is dADP + GTP = dATP + GDP. It carries out the reaction dCDP + GTP = dCTP + GDP. The enzyme catalyses dCDP + ATP = dCTP + ADP. It catalyses the reaction dGDP + ATP = dGTP + ADP. The catalysed reaction is dTDP + GTP = dTTP + GDP. It carries out the reaction dTDP + ATP = dTTP + ADP. Broad-specificity mitochondrial nucleoside phosphate kinase involved in cellular nucleotide homeostasis by catalyzing nucleoside-phosphate interconversions. Similar to other adenylate kinases, preferentially catalyzes the phosphorylation of the nucleoside monophosphate AMP with ATP as phosphate donor to produce ADP. Phosphorylates only AMP when using GTP as phosphate donor. In vitro, can also catalyze the phosphorylation of CMP, dAMP and dCMP and use GTP as an alternate phosphate donor. Moreover, exhibits a diphosphate kinase activity, producing ATP, CTP, GTP, UTP, TTP, dATP, dCTP and dGTP from the corresponding diphosphate substrates with either ATP or GTP as phosphate donors. Plays a role in controlling cellular ATP levels by regulating phosphorylation and activation of the energy sensor protein kinase AMPK. Plays a protective role in the cellular response to oxidative stress. This chain is Adenylate kinase 4, mitochondrial, found in Bos taurus (Bovine).